Reading from the N-terminus, the 181-residue chain is MSSLSVYHVSSPEIPNKVLTHFEDIASTLAEQGVRFDRWQAAAKIQPGASQEEVIGAYKEQIDKLMTERGYITVDVISLNSDHPQKAELRAKFLEEHRHGEDEVRFFVAGRGLFTLHIDDYVYAVLCEKNDLISVPAGTKHWFDMGENPHFVAIRLFNNPEGWVANFTGEDIAGRFPRLED.

Fe(2+)-binding residues include His-97, His-99, Glu-103, and His-141. Ni(2+) contacts are provided by His-97, His-99, Glu-103, and His-141.

The protein belongs to the acireductone dioxygenase (ARD) family. As to quaternary structure, monomer. Fe(2+) is required as a cofactor. It depends on Ni(2+) as a cofactor.

It catalyses the reaction 1,2-dihydroxy-5-(methylsulfanyl)pent-1-en-3-one + O2 = 3-(methylsulfanyl)propanoate + CO + formate + 2 H(+). The enzyme catalyses 1,2-dihydroxy-5-(methylsulfanyl)pent-1-en-3-one + O2 = 4-methylsulfanyl-2-oxobutanoate + formate + 2 H(+). It participates in amino-acid biosynthesis; L-methionine biosynthesis via salvage pathway; L-methionine from S-methyl-5-thio-alpha-D-ribose 1-phosphate: step 5/6. Its function is as follows. Catalyzes 2 different reactions between oxygen and the acireductone 1,2-dihydroxy-3-keto-5-methylthiopentene (DHK-MTPene) depending upon the metal bound in the active site. Fe-containing acireductone dioxygenase (Fe-ARD) produces formate and 2-keto-4-methylthiobutyrate (KMTB), the alpha-ketoacid precursor of methionine in the methionine recycle pathway. Ni-containing acireductone dioxygenase (Ni-ARD) produces methylthiopropionate, carbon monoxide and formate, and does not lie on the methionine recycle pathway. In Pseudomonas fluorescens (strain Pf0-1), this protein is Acireductone dioxygenase.